Consider the following 332-residue polypeptide: Glycerol-3-phosphate dehydrogenase [NAD(P)+] (332 aa).

NADPH contacts are provided by Trp-11, Arg-30, and Lys-108. The sn-glycerol 3-phosphate site is built by Lys-108, Gly-137, and Ser-139. Residue Ala-141 coordinates NADPH. Lys-192, Asp-245, Ser-255, Arg-256, and Asn-257 together coordinate sn-glycerol 3-phosphate. Lys-192 (proton acceptor) is an active-site residue. Arg-256 contributes to the NADPH binding site. Residues Val-280 and Glu-282 each contribute to the NADPH site.

Belongs to the NAD-dependent glycerol-3-phosphate dehydrogenase family.

The protein localises to the cytoplasm. It catalyses the reaction sn-glycerol 3-phosphate + NAD(+) = dihydroxyacetone phosphate + NADH + H(+). The catalysed reaction is sn-glycerol 3-phosphate + NADP(+) = dihydroxyacetone phosphate + NADPH + H(+). The protein operates within membrane lipid metabolism; glycerophospholipid metabolism. Catalyzes the reduction of the glycolytic intermediate dihydroxyacetone phosphate (DHAP) to sn-glycerol 3-phosphate (G3P), the key precursor for phospholipid synthesis. This is Glycerol-3-phosphate dehydrogenase [NAD(P)+] from Burkholderia multivorans (strain ATCC 17616 / 249).